The primary structure comprises 206 residues: Na(+)-translocating NADH-quinone reductase subunit E (206 aa).

The next 6 membrane-spanning stretches (helical) occupy residues 12-32, 36-56, 85-105, 118-138, 148-168, and 184-204; these read AVFVENMALAFFLGMCTFLAV, ISSAIGLGIAVVVVLTITVPV, FLGLLSYIGVIAALVQILEMF, GVFLPLITVNCAILGASLFMV, VIYGAGAGVGWALAITALAGI, and LGITFITVGLMSLGFMSFSGI.

Belongs to the NqrDE/RnfAE family. Composed of six subunits; NqrA, NqrB, NqrC, NqrD, NqrE and NqrF.

The protein resides in the cell inner membrane. It catalyses the reaction a ubiquinone + n Na(+)(in) + NADH + H(+) = a ubiquinol + n Na(+)(out) + NAD(+). In terms of biological role, NQR complex catalyzes the reduction of ubiquinone-1 to ubiquinol by two successive reactions, coupled with the transport of Na(+) ions from the cytoplasm to the periplasm. NqrA to NqrE are probably involved in the second step, the conversion of ubisemiquinone to ubiquinol. The sequence is that of Na(+)-translocating NADH-quinone reductase subunit E from Chromohalobacter salexigens (strain ATCC BAA-138 / DSM 3043 / CIP 106854 / NCIMB 13768 / 1H11).